A 185-amino-acid polypeptide reads, in one-letter code: MISVNDLRNGMTIEMDGTVYQVIEFLHVKPGKGAAFVRTKLKNILTGATIETTFRAGEKVEQANVDRREYQFLYADQGVWVFMNNETFEQIELTEEQVGNAPNFLLENMTVQIASWKGQVIGVDLPNTVELKVVETEPGFKGDTATGTYKPAKLETGYVVQVPLFVNTGDVIKVDTRTGEYLSRA.

This sequence belongs to the elongation factor P family.

The protein localises to the cytoplasm. Its pathway is protein biosynthesis; polypeptide chain elongation. In terms of biological role, involved in peptide bond synthesis. Stimulates efficient translation and peptide-bond synthesis on native or reconstituted 70S ribosomes in vitro. Probably functions indirectly by altering the affinity of the ribosome for aminoacyl-tRNA, thus increasing their reactivity as acceptors for peptidyl transferase. In Symbiobacterium thermophilum (strain DSM 24528 / JCM 14929 / IAM 14863 / T), this protein is Elongation factor P.